We begin with the raw amino-acid sequence, 241 residues long: Large ribosomal subunit protein uL2 (241 aa).

Positions 1-12 (MGKRLISQRRGR) are enriched in basic residues. Disordered stretches follow at residues 1-21 (MGKR…RSAS) and 200-241 (AVDH…GKRR).

It belongs to the universal ribosomal protein uL2 family. In terms of assembly, part of the 50S ribosomal subunit. Forms a bridge to the 30S subunit in the 70S ribosome.

In terms of biological role, one of the primary rRNA binding proteins. Required for association of the 30S and 50S subunits to form the 70S ribosome, for tRNA binding and peptide bond formation. It has been suggested to have peptidyltransferase activity; this is somewhat controversial. Makes several contacts with the 16S rRNA in the 70S ribosome. This is Large ribosomal subunit protein uL2 from Methanothermobacter thermautotrophicus (strain ATCC 29096 / DSM 1053 / JCM 10044 / NBRC 100330 / Delta H) (Methanobacterium thermoautotrophicum).